Here is a 503-residue protein sequence, read N- to C-terminus: T-complex protein 11 homolog (503 aa).

The segment covering 1-22 has biased composition (basic and acidic residues); the sequence is MPDVKESVPPKYPGDSEGRSCK. Disordered stretches follow at residues 1–42 and 254–285; these read MPDV…PPPF and DLTMSPPTCPDTSDSSSVAGPSPNEAANNPEP. Positions 263–285 are enriched in low complexity; sequence PDTSDSSSVAGPSPNEAANNPEP. The helical transmembrane segment at 330–349 threads the bilayer; sequence LTVMASVLLVASSFSGSVLF.

Belongs to the TCP11 family. Found in a complex at least composed of MROH2B, PRKACA isoform 2 and TCP11. Interacts with MROH2B. Interacts with PRKACA isoform 2. Isoform 2 and isoform 3 interact with ODF1 (via leucine zipper motif). In terms of processing, constitutively phosphorylated on serine, threonine and tyrosine residues within the head and tail regions of noncapacitated spermatozoa. Phosphorylation on tyrosine residues increases upon sperm capacitation within the acrosomal region in a protein kinase A (PKA)-dependent signaling pathway. In terms of tissue distribution, isoform 2 and isoform 3 are expressed in sperm. Isoform 1 is not detected in sperm (at protein level). Testis-specific. Isoform 1, isoform 2 and isoform 3 are expressed in sperm.

The protein localises to the membrane. It localises to the cell projection. The protein resides in the cilium. Its subcellular location is the flagellum. It is found in the cytoplasmic vesicle. The protein localises to the secretory vesicle. It localises to the acrosome. Its function is as follows. Plays a role in the process of sperm capacitation and acrosome reactions. Probable receptor for the putative fertilization-promoting peptide (FPP) at the sperm membrane that may modulate the activity of the adenylyl cyclase cAMP pathway. The sequence is that of T-complex protein 11 homolog (TCP11) from Homo sapiens (Human).